A 111-amino-acid chain; its full sequence is Ferredoxin-thioredoxin reductase, catalytic chain (111 aa).

A [4Fe-4S] cluster-binding site is contributed by Cys-52. Cys-54 serves as the catalytic Nucleophile. The cysteines at positions 54 and 84 are disulfide-linked. Residues Cys-71, Cys-73, and Cys-82 each contribute to the [4Fe-4S] cluster site.

This sequence belongs to the ferredoxin thioredoxin reductase beta subunit family. Heterodimer of subunit A (variable subunit) and subunit B (catalytic subunit). Heterodimeric FTR forms a complex with ferredoxin and thioredoxin. [4Fe-4S] cluster is required as a cofactor.

The protein resides in the plastid. The protein localises to the chloroplast. It catalyses the reaction [thioredoxin]-disulfide + 2 reduced [2Fe-2S]-[ferredoxin] + 2 H(+) = [thioredoxin]-dithiol + 2 oxidized [2Fe-2S]-[ferredoxin]. Catalytic subunit of the ferredoxin-thioredoxin reductase (FTR), which catalyzes the two-electron reduction of thioredoxins by the electrons provided by reduced ferredoxin. This Cyanidium caldarium (Red alga) protein is Ferredoxin-thioredoxin reductase, catalytic chain (ftrB).